The primary structure comprises 57 residues: MLKWALIFFVISLIAGFLGFSGVSAATAGIAKILFYIAVIIFLVFLVLALAVGGAVT.

2 consecutive transmembrane segments (helical) span residues 4–24 (WALIFFVISLIAGFLGFSGVS) and 33–53 (ILFYIAVIIFLVFLVLALAVG).

It belongs to the UPF0391 family.

The protein localises to the cell membrane. This is UPF0391 membrane protein RB0084 from Rhizobium meliloti (strain 1021) (Ensifer meliloti).